Here is a 337-residue protein sequence, read N- to C-terminus: Adenine deaminase (337 aa).

Zn(2+) contacts are provided by His-14, His-16, and His-194. Residue Glu-197 is the Proton donor of the active site. Residue Asp-275 participates in Zn(2+) binding. Asp-276 is a substrate binding site.

The protein belongs to the metallo-dependent hydrolases superfamily. Adenosine and AMP deaminases family. Adenine deaminase type 2 subfamily. The cofactor is Zn(2+).

It carries out the reaction adenine + H2O + H(+) = hypoxanthine + NH4(+). In terms of biological role, catalyzes the hydrolytic deamination of adenine to hypoxanthine. Plays an important role in the purine salvage pathway and in nitrogen catabolism. This chain is Adenine deaminase, found in Vibrio parahaemolyticus serotype O3:K6 (strain RIMD 2210633).